Consider the following 218-residue polypeptide: MTILKQLITKANLILPSVDKKVATLDSLVSVFKEIKCKDLKIDKPLTLTKPIGNGKKVFYYPLVENEKFTLAIFAFPPNTCIPTHDHPQMTVLSKVLYGSISCDSFDWIDNTSNVKKQGKAIYTGTNILNSNDEKVKITLPNENNIHRFQSGDEHCAVLDLLYPPYDSNFYRSCTYYRPTSVNGSIVDLMPYYPDFDCEGDSSNKELNDLHIELSKLK.

Requires Fe cation as cofactor.

The enzyme catalyses cysteamine + O2 = hypotaurine + H(+). This chain is Probable 2-aminoethanethiol dioxygenase (ado-1), found in Dictyostelium discoideum (Social amoeba).